The following is a 537-amino-acid chain: Cytoplasmic 60S subunit biogenesis factor REI1 homolog (537 aa).

2 C2H2-type zinc fingers span residues 18–42 and 83–107; these read YTCN…SDWH and KTCE…STKH. 2 disordered regions span residues 101-151 and 163-204; these read HLSS…AEEE and SIHD…PEAL. Residues 192-204 show a composition bias toward low complexity; sequence EETPTTTPKPEAL. A C2H2-type 3 zinc finger spans residues 260–284; sequence NECLTCGKMKVNVFAIQTHMRDKSH. Acidic residues predominate over residues 312–322; that stretch reads DWETEEEDKGE. Disordered stretches follow at residues 312 to 361 and 382 to 401; these read DWET…ASSL and GKHP…ADGI. Residues 323–339 show a composition bias toward basic and acidic residues; sequence EDGGVRLGAKRESKVVD. A compositionally biased stretch (acidic residues) spans 340–356; that stretch reads ENGDEVMEDEEGWETDS. Positions 383–395 are enriched in basic residues; it reads KHPHHSRENKKAH.

This sequence belongs to the REI1 family. Associates with nascent pre-60S particles that have not yet entered the translating pool, and is released from mature 60S subunits.

It localises to the cytoplasm. Pre-60S-associated factor involved in the cytoplasmic maturation of the 60S subunit. Involved in the dissociation and recycling of other late pre-60S factors before newly synthesized large ribosomal subunits enter translation. The protein is Cytoplasmic 60S subunit biogenesis factor REI1 homolog of Chaetomium thermophilum (strain DSM 1495 / CBS 144.50 / IMI 039719) (Thermochaetoides thermophila).